A 361-amino-acid chain; its full sequence is tRNA/tmRNA (uracil-C(5))-methyltransferase (361 aa).

S-adenosyl-L-methionine contacts are provided by glutamine 185, tyrosine 213, asparagine 218, glutamate 234, and aspartate 294. Cysteine 319 (nucleophile) is an active-site residue. Residue glutamate 353 is the Proton acceptor of the active site.

This sequence belongs to the class I-like SAM-binding methyltransferase superfamily. RNA M5U methyltransferase family. TrmA subfamily.

The enzyme catalyses uridine(54) in tRNA + S-adenosyl-L-methionine = 5-methyluridine(54) in tRNA + S-adenosyl-L-homocysteine + H(+). It carries out the reaction uridine(341) in tmRNA + S-adenosyl-L-methionine = 5-methyluridine(341) in tmRNA + S-adenosyl-L-homocysteine + H(+). Dual-specificity methyltransferase that catalyzes the formation of 5-methyluridine at position 54 (m5U54) in all tRNAs, and that of position 341 (m5U341) in tmRNA (transfer-mRNA). In Pseudomonas syringae pv. syringae (strain B728a), this protein is tRNA/tmRNA (uracil-C(5))-methyltransferase.